Reading from the N-terminus, the 145-residue chain is Large-conductance mechanosensitive channel (145 aa).

2 helical membrane-spanning segments follow: residues 30–50 and 74–94; these read VAVVIGGAFTSIVNAFVAWLM and GELVIAIINFLIIAFVIFLII.

Belongs to the MscL family. As to quaternary structure, homopentamer.

The protein resides in the cell inner membrane. Its function is as follows. Channel that opens in response to stretch forces in the membrane lipid bilayer. May participate in the regulation of osmotic pressure changes within the cell. The sequence is that of Large-conductance mechanosensitive channel from Synechocystis sp. (strain ATCC 27184 / PCC 6803 / Kazusa).